The primary structure comprises 1515 residues: Metal resistance protein YCF1 (1515 aa).

Topologically, residues 1–32 (MAGNLVSWACKLCRSPEGFGPISFYGDFTQCF) are vacuolar. Residues 33-53 (IDGVILNLSAIFMITFGIRDL) form a helical membrane-spanning segment. Residues 54–73 (VNLCKKKHSGIKYRRNWIIV) lie on the Cytoplasmic side of the membrane. The chain crosses the membrane as a helical span at residues 74-94 (SRMALVLLEIAFVSLASLNIS). Topologically, residues 95–99 (KEEAE) are vacuolar. A helical membrane pass occupies residues 100 to 120 (NFTIVSQYASTMLSLFVALAL). Over 121–130 (HWIEYDRSVV) the chain is Cytoplasmic. The chain crosses the membrane as a helical span at residues 131–151 (ANTVLLFYWLFETFGNFAKLI). The Vacuolar segment spans residues 152 to 169 (NILIRHTYEGIWYSGQTG). Residues 170–190 (FILTLFQVITCASILLLEALP) form a helical membrane-spanning segment. The Cytoplasmic segment spans residues 191-278 (KKPLMPHQHI…QKSNPSLSWA (88 aa)). At Ser-251 the chain carries Phosphoserine. The chain crosses the membrane as a helical span at residues 279 to 299 (ICRTFGSKMLLAAFFKAIHDV). The 304-residue stretch at 287–590 (MLLAAFFKAI…IPMVLNSFIE (304 aa)) folds into the ABC transmembrane type-1 1 domain. At 300–345 (LAFTQPQLLRILIKFVTDYNSERQDDHSSLQGFENNHPQKLPIVRG) the chain is on the vacuolar side. The helical transmembrane segment at 346–366 (FLIAFAMFLVGFTQTSVLHQY) threads the bilayer. Topologically, residues 367-422 (FLNVFNTGMYIKSALTALIYQKSLVLSNEASGLSSTGDIVNLMSVDVQKLQDLTQW) are cytoplasmic. Residues 423-443 (LNLIWSGPFQIIICLYSLYKL) form a helical membrane-spanning segment. Residues 444 to 446 (LGN) are Vacuolar-facing. The helical transmembrane segment at 447 to 467 (SMWVGVIILVIMMPLNSFLMR) threads the bilayer. Over 468 to 530 (IQKKLQKSQM…NLTKLGCYMA (63 aa)) the chain is Cytoplasmic. The helical transmembrane segment at 531-551 (VTSFQFNIVPFLVSCCTFAVF) threads the bilayer. Topologically, residues 552–572 (VYTEDRALTTDLVFPALTLFN) are vacuolar. Residues 573-593 (LLSFPLMIIPMVLNSFIEASV) form a helical membrane-spanning segment. At 594–943 (SIGRLFTFFT…VKWNIYLEYA (350 aa)) the chain is on the cytoplasmic side. Positions 626–853 (INIGDDATFL…ADSPLWKLLN (228 aa)) constitute an ABC transporter 1 domain. Residue 663 to 670 (GKVGSGKT) coordinates ATP. A phosphoserine mark is found at Ser-873, Ser-903, and Ser-908. Position 911 is a phosphothreonine (Thr-911). Position 914 is a phosphoserine (Ser-914). A helical transmembrane segment spans residues 944-964 (KACNPKSVCVFILFIVISMFL). The ABC transmembrane type-1 2 domain occupies 951 to 1235 (VCVFILFIVI…IVRMTVEVET (285 aa)). The Vacuolar portion of the chain corresponds to 965-1001 (SVMGNVWLKHWSEVNSRYGSNPNAARYLAIYFALGIG). The chain crosses the membrane as a helical span at residues 1002 to 1023 (SALATLIQTIVLWVFCTIHASK). The Cytoplasmic segment spans residues 1024–1066 (YLHNLMTNSVLRAPMTFFETTPIGRILNRFSNDIYKVDALLGR). A helical transmembrane segment spans residues 1067–1087 (TFSQFFVNAVKVTFTITVICA). A topological domain (vacuolar) is located at residue Thr-1088. The chain crosses the membrane as a helical span at residues 1089-1109 (TWQFIFIIIPLSVFYIYYQQY). At 1110–1180 (YLRTSRELRR…NANRWLAYRL (71 aa)) the chain is on the cytoplasmic side. A helical transmembrane segment spans residues 1181–1201 (ELIGSIIILGAATLSVFRLKQ). At 1202 to 1205 (GTLT) the chain is on the vacuolar side. Residues 1206–1226 (AGMVGLSLSYALQITQTLNWI) traverse the membrane as a helical segment. Residues 1227-1515 (VRMTVEVETN…CMEAGLVNEN (289 aa)) are Cytoplasmic-facing. Residues 1272 to 1507 (IKFNNYSTRY…NKSLFYSLCM (236 aa)) enclose the ABC transporter 2 domain. 1306-1313 (GRTGAGKS) provides a ligand contact to ATP.

The protein belongs to the ABC transporter superfamily. ABCC family. Conjugate transporter (TC 3.A.1.208) subfamily.

The protein resides in the vacuole membrane. The enzyme catalyses Cd(2+)(in) + ATP + H2O = Cd(2+)(out) + ADP + phosphate + H(+). It carries out the reaction an S-substituted glutathione(in) + ATP + H2O = an S-substituted glutathione(out) + ADP + phosphate + H(+). In terms of biological role, cooperates for the ATP-dependent vacuolar transport of bilirubin and glutathione conjugates. The sequence is that of Metal resistance protein YCF1 (YCF1) from Saccharomyces cerevisiae (strain ATCC 204508 / S288c) (Baker's yeast).